A 471-amino-acid chain; its full sequence is Adenosylhomocysteinase (471 aa).

Positions 58, 133, and 195 each coordinate substrate. 196–198 (TTT) is an NAD(+) binding site. Substrate contacts are provided by Lys225 and Asp229. NAD(+) is bound by residues Asn230, 259-264 (GFGDVG), Glu282, Asn317, 338-340 (IGH), and Asn383.

This sequence belongs to the adenosylhomocysteinase family. Requires NAD(+) as cofactor.

It localises to the cytoplasm. The catalysed reaction is S-adenosyl-L-homocysteine + H2O = L-homocysteine + adenosine. It functions in the pathway amino-acid biosynthesis; L-homocysteine biosynthesis; L-homocysteine from S-adenosyl-L-homocysteine: step 1/1. In terms of biological role, may play a key role in the regulation of the intracellular concentration of adenosylhomocysteine. This is Adenosylhomocysteinase from Rhodopseudomonas palustris (strain BisB5).